A 450-amino-acid chain; its full sequence is Transcription factor AP-2 gamma (450 aa).

Residue K10 forms a Glycyl lysine isopeptide (Lys-Gly) (interchain with G-Cter in SUMO) linkage. Disordered regions lie at residues 13–63 (EDCE…FPPP) and 90–126 (LHQP…GLLP). Positions 59 to 64 (YFPPPY) match the PPxY motif motif. A compositionally biased stretch (polar residues) spans 95-110 (PTGSQQQAWPGRQSQE). Residue S252 is modified to Phosphoserine; by PKA. The H-S-H (helix-span-helix), dimerization stretch occupies residues 293-424 (RRKAAHVTLL…YIKEALIVID (132 aa)). Residues 431–450 (GDQSPADSNKTLEKMEKHRK) are disordered. S434 carries the post-translational modification Phosphoserine. Basic and acidic residues predominate over residues 440–450 (KTLEKMEKHRK).

This sequence belongs to the AP-2 family. Binds DNA as a dimer. Can form homodimers or heterodimers with other AP-2 family members. Interacts with WWOX. Interacts with UBE2I. Interacts with KCTD1; this interaction represses transcription activation. Interacts with CITED2 (via C-terminus); the interaction stimulates TFAP2B-transcriptional activity. Interacts with CITED4. Interacts with MTA1. Sumoylated on Lys-10; which inhibits transcriptional activity.

It is found in the nucleus. Sequence-specific DNA-binding transcription factor that interacts with cellular enhancer elements to regulate transcription of selected genes, and which plays a key role in early embryonic development. AP-2 factors bind to the consensus sequence 5'-GCCNNNGGC-3' and activate genes involved in a large spectrum of important biological functions. TFAP2C plays a key role in early embryonic development by regulating both inner cell mass (ICM) and trophectoderm differentiation. At the 8-cell stage, during morula development, controls expression of cell-polarity genes. Upon trophoblast commitment, binds to late trophectoderm genes in blastocysts together with CDX2, and later to extra-embryonic ectoderm genes together with SOX2. Binds to both closed and open chromatin with other transcription factors. Involved in the MTA1-mediated epigenetic regulation of ESR1 expression in breast cancer. The sequence is that of Transcription factor AP-2 gamma (TFAP2C) from Homo sapiens (Human).